A 455-amino-acid chain; its full sequence is Argininosuccinate lyase (455 aa).

This sequence belongs to the lyase 1 family. Argininosuccinate lyase subfamily.

It localises to the cytoplasm. The catalysed reaction is 2-(N(omega)-L-arginino)succinate = fumarate + L-arginine. Its pathway is amino-acid biosynthesis; L-arginine biosynthesis; L-arginine from L-ornithine and carbamoyl phosphate: step 3/3. The sequence is that of Argininosuccinate lyase from Shewanella baltica (strain OS223).